The sequence spans 512 residues: Nephrocan (512 aa).

The first 19 residues, 1-19 (MHPLWAFLLGLSLTNGLSA), serve as a signal peptide directing secretion. The 25-residue stretch at 20-44 (NCPGRCSCDSMQSVQCYRLMELPSG) folds into the LRRNT domain. 17 LRR repeats span residues 45-69 (IPSTTKRLYISHSRIQHLQLSNFTG), 71-93 (LALEDFILLASGTESIENDTFKT), 94-117 (LSTLKTLELWKNKLRQVPSALPAN), 119-138 (EVLKLNDNAICALRGSEFEG), 139-162 (LKNLKVLELKNNLISSLSPSMLSP), 164-185 (ASLQSLMVDGNNIESVVGPLSL), 186-208 (PHLKYMSMENNQLHLIPGNVFTS), 210-232 (QNLQFLSFSGNFLTKIPINLPKS), 234-253 (LSLKMERNQLKVVRFRDMKH), 254-276 (LENLSHLYLSENFLSSIDGAQQL), 277-299 (TNLTTLEVSQNQLQMLPPRLPSR), 301-320 (QKLDCSSNFIQRVTAPEFQD), 321-344 (LRDLKHLFLDNNVVSLFEAGALQR), 346-371 (SQLSNLALEQNLLLSIPLRLPKTLAR), 373-389 (DLKGNAIQDMAERELRD), 390-413 (LKQLQVLNLRNNRISALDFKALEG), and 415-442 (PRLRHLYLDGNPWNCTCSLLRAREVLKA). N66 carries N-linked (GlcNAc...) asparagine glycosylation. A compositionally biased stretch (basic and acidic residues) spans 474 to 484 (EHHLQQSEKSK). The segment at 474-512 (EHHLQQSEKSKETKKKPKPEDSSSIRLNMDDDDDDYEID) is disordered. Positions 503–512 (DDDDDDYEID) are enriched in acidic residues.

Belongs to the small leucine-rich proteoglycan (SLRP) family. Post-translationally, N-glycosylated. Expressed at highest levels in the kidney, where it is primarily detected in the epithelial cells of distal tubules and collecting ducts, and more weakly in proximal epithelial cells. Expressed at lower levels in heart and lung (at protein level). Detected in skeletal muscle.

It localises to the secreted. In terms of biological role, may inhibit TGF-beta signaling. The polypeptide is Nephrocan (Mus musculus (Mouse)).